Consider the following 918-residue polypeptide: Alpha-scruin (918 aa).

6 Kelch repeats span residues 82–133 (VVLA…YFHR), 134–187 (RVYV…VMDE), 188–235 (RIFV…NNEG), 237–289 (IYVI…TQNK), 291–341 (IWIW…KTGA), and 342–390 (HVFI…AIPA). The segment at 398 to 427 (EVPTSTPSSKAKPQPGSKPTSVKYKKQPDI) is disordered. An IQ domain is found at 430 to 459 (RNEAAKKVQRRWRRYIEQKSITKRMQQGDS). Kelch repeat units follow at residues 590–641 (VIIG…YYRS), 642–695 (AIYI…VFND), 696–743 (VLYA…AHGG), 745–795 (IWLL…VCDN), 797–849 (IWLC…ALES), and 851–898 (LYIA…TIPP).

In terms of tissue distribution, sperm.

Its function is as follows. Actin bundling protein found in the acrosomal sperm process. This chain is Alpha-scruin, found in Limulus polyphemus (Atlantic horseshoe crab).